Consider the following 822-residue polypeptide: DNA gyrase subunit A (822 aa).

Positions L32–L497 constitute a Topo IIA-type catalytic domain. The O-(5'-phospho-DNA)-tyrosine intermediate role is filled by Y120. A GyrA-box motif is present at residues Q524–G530.

It belongs to the type II topoisomerase GyrA/ParC subunit family. As to quaternary structure, heterotetramer, composed of two GyrA and two GyrB chains. In the heterotetramer, GyrA contains the active site tyrosine that forms a transient covalent intermediate with DNA, while GyrB binds cofactors and catalyzes ATP hydrolysis.

The protein localises to the cytoplasm. It carries out the reaction ATP-dependent breakage, passage and rejoining of double-stranded DNA.. Functionally, a type II topoisomerase that negatively supercoils closed circular double-stranded (ds) DNA in an ATP-dependent manner to modulate DNA topology and maintain chromosomes in an underwound state. Negative supercoiling favors strand separation, and DNA replication, transcription, recombination and repair, all of which involve strand separation. Also able to catalyze the interconversion of other topological isomers of dsDNA rings, including catenanes and knotted rings. Type II topoisomerases break and join 2 DNA strands simultaneously in an ATP-dependent manner. This chain is DNA gyrase subunit A, found in Streptococcus pneumoniae (strain ATCC BAA-255 / R6).